Reading from the N-terminus, the 146-residue chain is Putative nickel-responsive regulator 1 (146 aa).

The Ni(2+) site is built by His-81, His-92, Tyr-94, and Cys-100.

Belongs to the transcriptional regulatory CopG/NikR family. The cofactor is Ni(2+).

In terms of biological role, transcriptional regulator. The protein is Putative nickel-responsive regulator 1 of Methanosarcina mazei (strain ATCC BAA-159 / DSM 3647 / Goe1 / Go1 / JCM 11833 / OCM 88) (Methanosarcina frisia).